A 498-amino-acid polypeptide reads, in one-letter code: Protein nucleotidyltransferase YdiU (498 aa).

G88, G90, R91, K111, D123, G124, R174, and R181 together coordinate ATP. D250 (proton acceptor) is an active-site residue. Mg(2+) is bound by residues N251 and D260. D260 lines the ATP pocket.

This sequence belongs to the SELO family. It depends on Mg(2+) as a cofactor. Mn(2+) serves as cofactor.

The catalysed reaction is L-seryl-[protein] + ATP = 3-O-(5'-adenylyl)-L-seryl-[protein] + diphosphate. It carries out the reaction L-threonyl-[protein] + ATP = 3-O-(5'-adenylyl)-L-threonyl-[protein] + diphosphate. The enzyme catalyses L-tyrosyl-[protein] + ATP = O-(5'-adenylyl)-L-tyrosyl-[protein] + diphosphate. It catalyses the reaction L-histidyl-[protein] + UTP = N(tele)-(5'-uridylyl)-L-histidyl-[protein] + diphosphate. The catalysed reaction is L-seryl-[protein] + UTP = O-(5'-uridylyl)-L-seryl-[protein] + diphosphate. It carries out the reaction L-tyrosyl-[protein] + UTP = O-(5'-uridylyl)-L-tyrosyl-[protein] + diphosphate. Functionally, nucleotidyltransferase involved in the post-translational modification of proteins. It can catalyze the addition of adenosine monophosphate (AMP) or uridine monophosphate (UMP) to a protein, resulting in modifications known as AMPylation and UMPylation. This chain is Protein nucleotidyltransferase YdiU, found in Methylorubrum populi (strain ATCC BAA-705 / NCIMB 13946 / BJ001) (Methylobacterium populi).